The sequence spans 402 residues: Endo-polygalacturonase (402 aa).

The N-terminal stretch at 1-23 is a signal peptide; that stretch reads MEYQSGKRVLSLSLGLIGLFSAS. Intrachain disulfides connect Cys41/Cys62 and Cys115/Cys125. Asp249 functions as the Proton donor in the catalytic mechanism. The active site involves His277.

Belongs to the glycosyl hydrolase 28 family. In terms of assembly, monomer.

Its subcellular location is the secreted. The enzyme catalyses (1,4-alpha-D-galacturonosyl)n+m + H2O = (1,4-alpha-D-galacturonosyl)n + (1,4-alpha-D-galacturonosyl)m.. Functionally, involved in maceration and soft-rotting of plant tissue. In Pectobacterium parmentieri, this protein is Endo-polygalacturonase (pehA).